A 164-amino-acid chain; its full sequence is uncharacterized protein (164 aa).

Positions 28–157 (EAEILYQLQG…LIDVLARMRN (130 aa)) constitute an HTH marR-type domain. The segment at residues 71 to 94 (QSDLQKKVNIDSAAVTRHLKQLES) is a DNA-binding region (H-T-H motif).

This is an uncharacterized protein from Bacillus subtilis (strain 168).